The sequence spans 374 residues: Alcohol dehydrogenase class-3 (374 aa).

Ala-2 bears the N-acetylalanine mark. Zn(2+) contacts are provided by Cys-45, His-67, Cys-97, Cys-100, Cys-103, Cys-111, and Cys-174. Lys-233 bears the N6-succinyllysine mark. Ser-247 carries the phosphoserine modification. Lys-315 bears the N6-succinyllysine mark. Residues Ser-324 and Ser-351 each carry the phosphoserine modification.

The protein belongs to the zinc-containing alcohol dehydrogenase family. Class-III subfamily. Homodimer. Zn(2+) serves as cofactor.

It localises to the cytoplasm. It carries out the reaction a primary alcohol + NAD(+) = an aldehyde + NADH + H(+). The catalysed reaction is a secondary alcohol + NAD(+) = a ketone + NADH + H(+). It catalyses the reaction S-(hydroxymethyl)glutathione + NADP(+) = S-formylglutathione + NADPH + H(+). The enzyme catalyses S-(hydroxymethyl)glutathione + NAD(+) = S-formylglutathione + NADH + H(+). It carries out the reaction 20-oxo-(5Z,8Z,11Z,14Z)-eicosatetraenoate + NAD(+) + H2O = (5Z,8Z,11Z,14Z)-eicosatetraenedioate + NADH + 2 H(+). The catalysed reaction is 20-hydroxy-(5Z,8Z,11Z,14Z)-eicosatetraenoate + NAD(+) = 20-oxo-(5Z,8Z,11Z,14Z)-eicosatetraenoate + NADH + H(+). It catalyses the reaction S-nitrosoglutathione + NADH + H(+) = S-(hydroxysulfenamide)glutathione + NAD(+). Its function is as follows. Catalyzes the oxidation of long-chain primary alcohols and the oxidation of S-(hydroxymethyl) glutathione. Also oxidizes long chain omega-hydroxy fatty acids, such as 20-HETE, producing both the intermediate aldehyde, 20-oxoarachidonate and the end product, a dicarboxylic acid, (5Z,8Z,11Z,14Z)-eicosatetraenedioate. Class-III ADH is remarkably ineffective in oxidizing ethanol. Required for clearance of cellular formaldehyde, a cytotoxic and carcinogenic metabolite that induces DNA damage. Also acts as a S-nitroso-glutathione reductase by catalyzing the NADH-dependent reduction of S-nitrosoglutathione, thereby regulating protein S-nitrosylation. This Oryctolagus cuniculus (Rabbit) protein is Alcohol dehydrogenase class-3.